Here is a 260-residue protein sequence, read N- to C-terminus: LOB domain-containing protein 6 (260 aa).

The LOB domain occupies 32–133 (SPCAACKFLR…QDLARAKYEL (102 aa)).

The protein belongs to the LOB domain-containing protein family. As to quaternary structure, interacts with RS2. In terms of tissue distribution, expressed in leaves, leaf primordia, immature ears, immature tassels, whole ovules, silk and husk leaves. Found on the adaxial side of organs.

Its subcellular location is the nucleus. Its function is as follows. Promotes the switch from proliferation to differentiation in the embryo sac. Negative regulator of cell proliferation in the adaxial side of leaves. Regulates the formation of a symmetric lamina and the establishment of venation. Interacts directly with RS2 (rough sheath 2) to repress some knox homeobox genes. In Zea mays (Maize), this protein is LOB domain-containing protein 6 (LBD6).